The primary structure comprises 254 residues: Type III pantothenate kinase (254 aa).

ATP is bound at residue 13–20; that stretch reads MIGNTRQH. Residues Y84 and 88–91 contribute to the substrate site; that span reads GLDR. The active-site Proton acceptor is D90. Position 110 (D110) interacts with K(+). Residue T113 participates in ATP binding. T166 is a substrate binding site.

It belongs to the type III pantothenate kinase family. Homodimer. It depends on NH4(+) as a cofactor. K(+) serves as cofactor.

The protein localises to the cytoplasm. The catalysed reaction is (R)-pantothenate + ATP = (R)-4'-phosphopantothenate + ADP + H(+). It functions in the pathway cofactor biosynthesis; coenzyme A biosynthesis; CoA from (R)-pantothenate: step 1/5. Its function is as follows. Catalyzes the phosphorylation of pantothenate (Pan), the first step in CoA biosynthesis. In Thermosynechococcus vestitus (strain NIES-2133 / IAM M-273 / BP-1), this protein is Type III pantothenate kinase.